We begin with the raw amino-acid sequence, 242 residues long: Tryptophan synthase alpha chain (242 aa).

Active-site proton acceptor residues include E31 and D42.

Belongs to the TrpA family. Tetramer of two alpha and two beta chains.

The catalysed reaction is (1S,2R)-1-C-(indol-3-yl)glycerol 3-phosphate + L-serine = D-glyceraldehyde 3-phosphate + L-tryptophan + H2O. It functions in the pathway amino-acid biosynthesis; L-tryptophan biosynthesis; L-tryptophan from chorismate: step 5/5. Functionally, the alpha subunit is responsible for the aldol cleavage of indoleglycerol phosphate to indole and glyceraldehyde 3-phosphate. This is Tryptophan synthase alpha chain from Staphylococcus aureus (strain USA300).